The sequence spans 757 residues: Polyribonucleotide nucleotidyltransferase (757 aa).

Asp-531 and Asp-537 together coordinate Mg(2+). The KH domain occupies 597 to 656 (PRVTTIRVPVDKIGEVIGPKGKIINAITEETGAQISIEDDGTVFVGATDGPSAQAAIDRI). The S1 motif domain maps to 668-737 (GERFLGTVVK…KRGKISLVLV (70 aa)).

This sequence belongs to the polyribonucleotide nucleotidyltransferase family. Mg(2+) serves as cofactor.

The protein localises to the cytoplasm. It carries out the reaction RNA(n+1) + phosphate = RNA(n) + a ribonucleoside 5'-diphosphate. Its function is as follows. Involved in mRNA degradation. Catalyzes the phosphorolysis of single-stranded polyribonucleotides processively in the 3'- to 5'-direction. This chain is Polyribonucleotide nucleotidyltransferase, found in Mycolicibacterium paratuberculosis (strain ATCC BAA-968 / K-10) (Mycobacterium paratuberculosis).